The following is a 172-amino-acid chain: Large ribosomal subunit protein uL10 (172 aa).

Belongs to the universal ribosomal protein uL10 family. In terms of assembly, part of the ribosomal stalk of the 50S ribosomal subunit. The N-terminus interacts with L11 and the large rRNA to form the base of the stalk. The C-terminus forms an elongated spine to which L12 dimers bind in a sequential fashion forming a multimeric L10(L12)X complex.

Functionally, forms part of the ribosomal stalk, playing a central role in the interaction of the ribosome with GTP-bound translation factors. This is Large ribosomal subunit protein uL10 from Prosthecochloris aestuarii (strain DSM 271 / SK 413).